Consider the following 267-residue polypeptide: Glutamate 5-kinase (267 aa).

Lys14 serves as a coordination point for ATP. The substrate site is built by Ser54, Asp141, and Asn157. ATP is bound by residues Ser177–Asp178 and Thr219–Lys225.

The protein belongs to the glutamate 5-kinase family.

Its subcellular location is the cytoplasm. The catalysed reaction is L-glutamate + ATP = L-glutamyl 5-phosphate + ADP. The protein operates within amino-acid biosynthesis; L-proline biosynthesis; L-glutamate 5-semialdehyde from L-glutamate: step 1/2. Catalyzes the transfer of a phosphate group to glutamate to form L-glutamate 5-phosphate. In Streptococcus thermophilus (strain CNRZ 1066), this protein is Glutamate 5-kinase.